The following is a 464-amino-acid chain: Argininosuccinate lyase (464 aa).

This sequence belongs to the lyase 1 family. Argininosuccinate lyase subfamily.

The protein resides in the cytoplasm. It catalyses the reaction 2-(N(omega)-L-arginino)succinate = fumarate + L-arginine. It functions in the pathway amino-acid biosynthesis; L-arginine biosynthesis; L-arginine from L-ornithine and carbamoyl phosphate: step 3/3. The sequence is that of Argininosuccinate lyase from Pseudomonas syringae pv. syringae (strain B728a).